Consider the following 189-residue polypeptide: Crossover junction endodeoxyribonuclease RuvC (189 aa).

Residues Asp-9, Glu-70, and Asp-143 contribute to the active site. Positions 9, 70, and 143 each coordinate Mg(2+). The span at 162–178 (MGAASGNSSLTPAQKAW) shows a compositional bias: low complexity. The disordered stretch occupies residues 162–189 (MGAASGNSSLTPAQKAWADAEAKARRKR). The segment covering 179 to 189 (ADAEAKARRKR) has biased composition (basic and acidic residues).

Belongs to the RuvC family. In terms of assembly, homodimer which binds Holliday junction (HJ) DNA. The HJ becomes 2-fold symmetrical on binding to RuvC with unstacked arms; it has a different conformation from HJ DNA in complex with RuvA. In the full resolvosome a probable DNA-RuvA(4)-RuvB(12)-RuvC(2) complex forms which resolves the HJ. It depends on Mg(2+) as a cofactor.

The protein localises to the cytoplasm. The enzyme catalyses Endonucleolytic cleavage at a junction such as a reciprocal single-stranded crossover between two homologous DNA duplexes (Holliday junction).. The RuvA-RuvB-RuvC complex processes Holliday junction (HJ) DNA during genetic recombination and DNA repair. Endonuclease that resolves HJ intermediates. Cleaves cruciform DNA by making single-stranded nicks across the HJ at symmetrical positions within the homologous arms, yielding a 5'-phosphate and a 3'-hydroxyl group; requires a central core of homology in the junction. The consensus cleavage sequence is 5'-(A/T)TT(C/G)-3'. Cleavage occurs on the 3'-side of the TT dinucleotide at the point of strand exchange. HJ branch migration catalyzed by RuvA-RuvB allows RuvC to scan DNA until it finds its consensus sequence, where it cleaves and resolves the cruciform DNA. This Paenarthrobacter aurescens (strain TC1) protein is Crossover junction endodeoxyribonuclease RuvC.